The following is a 190-amino-acid chain: Potassium-transporting ATPase KdpC subunit (190 aa).

The chain crosses the membrane as a helical span at residues 11-31; sequence LIVLMSLITGVAYPLVVTGVA.

It belongs to the KdpC family. As to quaternary structure, the system is composed of three essential subunits: KdpA, KdpB and KdpC.

Its subcellular location is the cell inner membrane. In terms of biological role, part of the high-affinity ATP-driven potassium transport (or Kdp) system, which catalyzes the hydrolysis of ATP coupled with the electrogenic transport of potassium into the cytoplasm. This subunit acts as a catalytic chaperone that increases the ATP-binding affinity of the ATP-hydrolyzing subunit KdpB by the formation of a transient KdpB/KdpC/ATP ternary complex. In Pseudomonas syringae pv. tomato (strain ATCC BAA-871 / DC3000), this protein is Potassium-transporting ATPase KdpC subunit.